Reading from the N-terminus, the 478-residue chain is Centromere DNA-binding protein complex CBF3 subunit C (478 aa).

The interval 206–251 (EVGEEKDVDVSGANSDENSSPSSTIKNKKRSASKRSHSDNGNVGAT) is disordered. A compositionally biased stretch (polar residues) spans 217–230 (GANSDENSSPSSTI). Positions 231 to 240 (KNKKRSASKR) are enriched in basic residues.

Component of the CBF3 copmplex, which is formed of CBF3A/CBF2, CBF3B/CEP3, CBF3C/CTF13 and CBF3D. CBF3C interacts with CBF3D and SGT1.

The protein localises to the nucleus. Its subcellular location is the chromosome. It is found in the centromere. In terms of biological role, acts as a central component of the centromere DNA-binding protein complex CBF3, which is essential for chromosome segregation and movement of centromeres along microtubules. CBF3 is required for the recruitment of other kinetochore complexes to CEN DNA. It plays a role in the attachment of chromosomes to the spindle and binds selectively to a highly conserved DNA sequence called CDEIII, found in centromers and in several promoters. The association of CBF3C with CBF3D and SGT1 is required for CBF3C activation and CBF3 assembly. In Saccharomyces cerevisiae (strain ATCC 204508 / S288c) (Baker's yeast), this protein is Centromere DNA-binding protein complex CBF3 subunit C (CTF13).